We begin with the raw amino-acid sequence, 258 residues long: Imidazole glycerol phosphate synthase subunit HisF (258 aa).

Catalysis depends on residues Asp11 and Asp130.

It belongs to the HisA/HisF family. As to quaternary structure, heterodimer of HisH and HisF.

It localises to the cytoplasm. The catalysed reaction is 5-[(5-phospho-1-deoxy-D-ribulos-1-ylimino)methylamino]-1-(5-phospho-beta-D-ribosyl)imidazole-4-carboxamide + L-glutamine = D-erythro-1-(imidazol-4-yl)glycerol 3-phosphate + 5-amino-1-(5-phospho-beta-D-ribosyl)imidazole-4-carboxamide + L-glutamate + H(+). The protein operates within amino-acid biosynthesis; L-histidine biosynthesis; L-histidine from 5-phospho-alpha-D-ribose 1-diphosphate: step 5/9. Its function is as follows. IGPS catalyzes the conversion of PRFAR and glutamine to IGP, AICAR and glutamate. The HisF subunit catalyzes the cyclization activity that produces IGP and AICAR from PRFAR using the ammonia provided by the HisH subunit. The sequence is that of Imidazole glycerol phosphate synthase subunit HisF from Lachnoclostridium phytofermentans (strain ATCC 700394 / DSM 18823 / ISDg) (Clostridium phytofermentans).